We begin with the raw amino-acid sequence, 552 residues long: Polypyrimidine tract-binding protein 3 (552 aa).

The residue at position 1 (Met1) is an N-acetylmethionine. Ser17 carries the phosphoserine modification. The span at 32-43 (MNSSTPSTANGN) shows a compositional bias: polar residues. The interval 32–55 (MNSSTPSTANGNDSKKFKRDRPPC) is disordered. RRM domains are found at residues 59 to 143 (RVLH…NLPN), 182 to 258 (LRII…FSKL), and 358 to 432 (SVLL…LSKH). A Glycyl lysine isopeptide (Lys-Gly) (interchain with G-Cter in SUMO2) cross-link involves residue Lys65. Position 127 is a phosphotyrosine (Tyr127). Thr138 bears the Phosphothreonine mark. Residue Lys216 forms a Glycyl lysine isopeptide (Lys-Gly) (interchain with G-Cter in SUMO2) linkage. Residue Lys423 is modified to N6-acetyllysine. Residues 435–455 (VQLPREGQEDQGLTKDFSNSP) form a disordered region. Ser454 is subject to Phosphoserine. In terms of domain architecture, RRM 4 spans 475–550 (ATLHLSNIPP…HHLRVSFSKS (76 aa)).

Interacts with THBS4 (via the acidic amphipathic C-terminus). In terms of tissue distribution, expressed in several hematopoietic cell lines examined.

Functionally, RNA-binding protein that mediates pre-mRNA alternative splicing regulation. Plays a role in the regulation of cell proliferation, differentiation and migration. Positive regulator of EPO-dependent erythropoiesis. Participates in cell differentiation regulation by repressing tissue-specific exons. Promotes FAS exon 6 skipping. Binds RNA, preferentially to both poly(G) and poly(U). The protein is Polypyrimidine tract-binding protein 3 (PTBP3) of Homo sapiens (Human).